A 133-amino-acid polypeptide reads, in one-letter code: Small ribosomal subunit protein bS6 (133 aa).

Residues 93–133 (KTAVTEPSPMMKEEPRRERRDDSAPRQERAEKKTETTEDNA) are disordered. Residues 103–133 (MKEEPRRERRDDSAPRQERAEKKTETTEDNA) are compositionally biased toward basic and acidic residues.

Belongs to the bacterial ribosomal protein bS6 family.

In terms of biological role, binds together with bS18 to 16S ribosomal RNA. The sequence is that of Small ribosomal subunit protein bS6 from Alteromonas mediterranea (strain DSM 17117 / CIP 110805 / LMG 28347 / Deep ecotype).